The primary structure comprises 1070 residues: Duffy receptor gamma form (1070 aa).

A signal peptide spans 1 to 21 (MEGKKKRPLFFLLVLLLSHKA). Topologically, residues 22-1003 (NNVLFERMNG…SYECFTKGSS (982 aa)) are extracellular. N-linked (GlcNAc...) asparagine glycosylation is found at N134 and N179. 2 cysteine pairs are disulfide-bonded: C214-C243 and C227-C234. Positions 279 to 281 (RGD) match the Cell attachment site motif. 4 disulfides stabilise this stretch: C296–C372, C410–C427, C422–C502, and C431–C500. Positions 518–912 (VGSGVESKAP…LNNRKLNRDQ (395 aa)) are disordered. The segment covering 526–541 (APSSNPINEAVKSSSG) has biased composition (polar residues). 3 stretches are compositionally biased toward basic and acidic residues: residues 544–559 (KVQE…EGEG), 672–707 (GEVH…DDRS), and 714–731 (HTDE…KDTE). Residue N676 is glycosylated (N-linked (GlcNAc...) asparagine). A compositionally biased stretch (polar residues) spans 732-763 (TTGGSTLTPEQNVSVASDNGNVPGSGNKQNEG). N-linked (GlcNAc...) asparagine glycosylation is present at N743. A compositionally biased stretch (low complexity) spans 766–776 (ALSGAESLESS). N-linked (GlcNAc...) asparagine glycosylation is present at N785. The span at 796-807 (GNEKDFQKHDFM) shows a compositional bias: basic and acidic residues. Residues 814–863 (DQTSSDHTSSDQTSSDQTSSDQTSSDQTSSDQTSSDQTSSDQTSSDQTID) show a composition bias toward low complexity. A compositionally biased stretch (basic and acidic residues) spans 864-888 (TEGHHRDNVRNPEIKSSEDMSKGDF). The segment covering 890 to 906 (RNSNSNELYSHNNLNNR) has biased composition (polar residues). N-linked (GlcNAc...) asparagine glycosylation is present at N936. Residues 1004-1025 (TGIVYFATGGAFLIILLLFASW) traverse the membrane as a helical segment. Residues 1026-1070 (NAASNDYEEEATFDEFEEYCYNIHRTPQMPNDIEHMQQFTPLDYS) are Cytoplasmic-facing.

The protein resides in the membrane. In terms of biological role, binds to Neu5Gc-sialylated receptors on macaque erythrocytes. The polypeptide is Duffy receptor gamma form (Plasmodium knowlesi).